Consider the following 181-residue polypeptide: Inner membrane-spanning protein YciB (181 aa).

Helical transmembrane passes span 10–30 (LVIF…GALI), 50–70 (MHLI…VFHD), 80–100 (IIYS…KSIL), 118–138 (VTWY…YVAF), and 148–168 (FKVF…VFYL).

This sequence belongs to the YciB family.

It localises to the cell inner membrane. In terms of biological role, plays a role in cell envelope biogenesis, maintenance of cell envelope integrity and membrane homeostasis. The polypeptide is Inner membrane-spanning protein YciB (Shewanella baltica (strain OS223)).